The chain runs to 262 residues: Matrilysin (262 aa).

The N-terminal stretch at 1–12 (LCVLCLLPQSPA) is a signal peptide. Residues 13-89 (LPLPREAGGH…PRCGLPDTGE (77 aa)) constitute a propeptide, activation peptide. The short motif at 80-87 (PRCGLPDT) is the Cysteine switch element. A Zn(2+)-binding site is contributed by C82. Residue D148 coordinates Ca(2+). Positions 158 and 160 each coordinate Zn(2+). Ca(2+)-binding residues include D165, G166, G168, and T170. Residue H173 participates in Zn(2+) binding. G180, G182, and D184 together coordinate Ca(2+). A Zn(2+)-binding site is contributed by H186. 2 residues coordinate Ca(2+): D188 and E191. H209 serves as a coordination point for Zn(2+). Residue E210 is part of the active site. Residues H213 and H219 each contribute to the Zn(2+) site.

It belongs to the peptidase M10A family. Requires Ca(2+) as cofactor. It depends on Zn(2+) as a cofactor.

The protein resides in the secreted. It is found in the extracellular space. It localises to the extracellular matrix. It catalyses the reaction Cleavage of 14-Ala-|-Leu-15 and 16-Tyr-|-Leu-17 in B chain of insulin. No action on collagen types I, II, IV, V. Cleaves gelatin chain alpha2(I) &gt; alpha1(I).. Degrades casein, gelatins of types I, III, IV, and V, and fibronectin. Activates procollagenase. The protein is Matrilysin (MMP7) of Felis catus (Cat).